We begin with the raw amino-acid sequence, 142 residues long: Ribosome-binding factor A (142 aa).

The span at 118 to 130 (DKAKQKQAGREDD) shows a compositional bias: basic and acidic residues. Residues 118–142 (DKAKQKQAGREDDTPSVDEQEKDTD) form a disordered region. Over residues 131–142 (TPSVDEQEKDTD) the composition is skewed to acidic residues.

It belongs to the RbfA family. In terms of assembly, monomer. Binds 30S ribosomal subunits, but not 50S ribosomal subunits or 70S ribosomes.

It is found in the cytoplasm. One of several proteins that assist in the late maturation steps of the functional core of the 30S ribosomal subunit. Associates with free 30S ribosomal subunits (but not with 30S subunits that are part of 70S ribosomes or polysomes). Required for efficient processing of 16S rRNA. May interact with the 5'-terminal helix region of 16S rRNA. This Shewanella denitrificans (strain OS217 / ATCC BAA-1090 / DSM 15013) protein is Ribosome-binding factor A.